Here is a 143-residue protein sequence, read N- to C-terminus: Transcriptional regulator MraZ (143 aa).

SpoVT-AbrB domains are found at residues 5–47 (EYRH…PQSE) and 76–119 (ASEC…SKTL).

This sequence belongs to the MraZ family. As to quaternary structure, forms oligomers.

The protein localises to the cytoplasm. It localises to the nucleoid. This Shouchella clausii (strain KSM-K16) (Alkalihalobacillus clausii) protein is Transcriptional regulator MraZ.